A 198-amino-acid chain; its full sequence is Regulation of enolase protein 1 (198 aa).

Its subcellular location is the cytoplasm. In terms of biological role, functions in the galactose metabolic pathway via the GAL83 protein and that it may control the level of ENO1. The protein is Regulation of enolase protein 1 (REE1) of Saccharomyces cerevisiae (strain ATCC 204508 / S288c) (Baker's yeast).